The following is a 185-amino-acid chain: MLNQIKQDAQDRMTKSIDALRNSLASVRTGRASPSLLDGIKIKAYGTDTPLNQVASISVSEGRSLVITVFDKNMSKDVEKAIYASDLGLTPTVVGTLIRLNLPPLTEERRKELTKVVHSEGEDTKVAIRNIRRDANQQIKDMLKSKEITEDEVRHGEEDIQKLTDKAIKSVDEVVKSKEQELMTV.

It belongs to the RRF family.

It localises to the cytoplasm. In terms of biological role, responsible for the release of ribosomes from messenger RNA at the termination of protein biosynthesis. May increase the efficiency of translation by recycling ribosomes from one round of translation to another. This is Ribosome-recycling factor from Xylella fastidiosa (strain Temecula1 / ATCC 700964).